The following is a 929-amino-acid chain: Diacylglycerol kinase zeta (929 aa).

A compositionally biased stretch (basic and acidic residues) spans 1-14; that stretch reads MEPRDPSPEARSSD. Disordered regions lie at residues 1–46 and 59–80; these read MEPR…RRFP and KSGLQHLAPPPPTPGAPCGESE. Low complexity predominate over residues 15-24; the sequence is SESASASSSG. A compositionally biased stretch (basic and acidic residues) spans 25–37; the sequence is SERDADPEPDKAP. 2 Phorbol-ester/DAG-type zinc fingers span residues 98 to 153 and 173 to 231; these read HIWF…NFRC and HHWV…EEPC. The disordered stretch occupies residues 257 to 281; that stretch reads KASKKKKRASFKRRSSKKGPEEGRW. The span at 258–273 shows a compositional bias: basic residues; it reads ASKKKKRASFKRRSSK. A mediates interaction with RASGRP1 region spans residues 279 to 417; sequence GRWRPFIIRP…HVEEGNVVQL (139 aa). In terms of domain architecture, DAGKc spans 292-426; that stretch reads PLMKPLLVFV…LDRWDLRAEP (135 aa). A Nuclear export signal motif is present at residues 362–370; that stretch reads LSTLDQLRL. Residues 421–441 form a disordered region; that stretch reads DLRAEPNPEAGPEERDDGATD. Phosphoserine is present on Ser706. A disordered region spans residues 760-783; sequence ARPDLPTPTSPLPASPCSPTPGSL. Over residues 764 to 778 the composition is skewed to pro residues; the sequence is LPTPTSPLPASPCSP. Position 782 is a phosphoserine (Ser782). 2 ANK repeats span residues 823-853 and 858-887; these read QSRTLLHHAVSTGSKEVVRYLLDHAPPEILD and NGETCLHQAAALGQRTICHYIVEAGASLMK. Residues 925 to 929 carry the PDZ-binding motif; the sequence is QETAV.

It belongs to the eukaryotic diacylglycerol kinase family. As to quaternary structure, interacts (via PDZ-binding motif) with the PDZ domain of the syntrophin SNTG1 and that of SNX27. Interacts with IRS1 in the absence of insulin; insulin stimulation decreases this interaction. Found in a ternary complex with IRS1 and PIP5K1A in the absence of insulin. Interacts with PIP5K1A. Forms a signaling complex with RASGRP1 and HRAS.

Its subcellular location is the nucleus. The protein resides in the cytoplasm. It localises to the cytosol. It is found in the cell membrane. The protein localises to the cell projection. Its subcellular location is the lamellipodium. The catalysed reaction is a 1,2-diacyl-sn-glycerol + ATP = a 1,2-diacyl-sn-glycero-3-phosphate + ADP + H(+). It catalyses the reaction a 1-O-alkyl-sn-glycerol + ATP = a 1-O-alkyl-sn-glycero-3-phosphate + ADP + H(+). The enzyme catalyses 1-O-alkyl-2-acyl-sn-glycerol + ATP = 1-O-alkyl-2-acyl-sn-glycero-3-phosphate + ADP + H(+). It carries out the reaction 1,2-didecanoyl-sn-glycerol + ATP = 1,2-didecanoyl-sn-glycero-3-phosphate + ADP + H(+). The catalysed reaction is 1,2-ditetradecanoyl-sn-glycerol + ATP = 1,2-ditetradecanoyl-sn-glycero-3-phosphate + ADP + H(+). It catalyses the reaction 1-hexadecanoyl-2-(9Z-octadecenoyl)-sn-glycerol + ATP = 1-hexadecanoyl-2-(9Z-octadecenoyl)-sn-glycero-3-phosphate + ADP + H(+). The enzyme catalyses 1-hexadecanoyl-2-(5Z,8Z,11Z,14Z-eicosatetraenoyl)-sn-glycerol + ATP = 1-hexadecanoyl-2-(5Z,8Z,11Z,14Z-eicosatetraenoyl)-sn-glycero-3-phosphate + ADP + H(+). It carries out the reaction 1-octadecanoyl-2-(9Z-octadecenoyl)-sn-glycerol + ATP = 1-octadecanoyl-2-(9Z-octadecenoyl)-sn-glycero-3-phosphate + ADP + H(+). The catalysed reaction is 1-octadecanoyl-2-(5Z,8Z,11Z,14Z-eicosatetraenoyl)-sn-glycerol + ATP = 1-octadecanoyl-2-(5Z,8Z,11Z,14Z-eicosatetraenoyl)-sn-glycero-3-phosphate + ADP + H(+). It catalyses the reaction 1-octadecanoyl-2-(4Z,7Z,10Z,13Z,16Z,19Z-docosahexaenoyl)-sn-glycerol + ATP = 1-octadecanoyl-2-(4Z,7Z,10Z,13Z,16Z,19Z-docosahexaenoyl)-sn-glycero-3-phosphate + ADP + H(+). The enzyme catalyses 1,2-di-(9Z-octadecenoyl)-sn-glycerol + ATP = 1,2-di-(9Z-octadecenoyl)-sn-glycero-3-phosphate + ADP + H(+). It carries out the reaction 1-(9Z-octadecenoyl)-2-hexadecanoyl-sn-glycerol + ATP = 1-(9Z)-octadecenoyl-2-hexadecanoyl-sn-glycero-3-phosphate + ADP + H(+). The catalysed reaction is 1-eicosanoyl-2-(5Z,8Z,11Z,14Z)-eicosatetraenoyl-sn-glycerol + ATP = 1-eicosanoyl-2-(5Z,8Z,11Z,14Z)-eicosatetraenoyl-sn-glycero-3-phosphate + ADP + H(+). It catalyses the reaction 1,2-di-(5Z,8Z,11Z,14Z)-eicosatetraenoyl-sn-glycerol + ATP = 1,2-di-(5Z,8Z,11Z,14Z)-eicosatetraenoyl-sn-glycero-3-phosphate + ADP + H(+). The enzyme catalyses 1-O-hexadecyl-2-acetyl-sn-glycerol + ATP = 1-O-hexadecyl-2-acetyl-sn-glycero-3-phosphate + ADP + H(+). It carries out the reaction 1-O-hexadecyl-2-(5Z,8Z,11Z,14Z-eicosatetraenoyl)-sn-glycerol + ATP = 1-O-hexadecyl-2-(5Z,8Z,11Z,14Z-eicosatetraenoyl)-sn-glycero-3-phosphate + ADP + H(+). The catalysed reaction is 1-O-hexadecyl-2-(9Z-octadecenoyl)-sn-glycerol + ATP = 1-O-hexadecyl-2-(9Z-octadecenoyl)-sn-glycero-3-phosphate + ADP + H(+). It catalyses the reaction 1-O-hexadecyl-sn-glycerol + ATP = 1-O-hexadecyl-sn-glycero-3-phosphate + ADP + H(+). It functions in the pathway lipid metabolism; glycerolipid metabolism. Functionally, diacylglycerol kinase that converts diacylglycerol/DAG into phosphatidic acid/phosphatidate/PA and regulates the respective levels of these two bioactive lipids. Thereby, acts as a central switch between the signaling pathways activated by these second messengers with different cellular targets and opposite effects in numerous biological processes. Also plays an important role in the biosynthesis of complex lipids. Does not exhibit an acyl chain-dependent substrate specificity among diacylglycerol species. Can also phosphorylate 1-alkyl-2-acylglycerol in vitro but less efficiently and with a preference for alkylacylglycerols containing an arachidonoyl group. The biological processes it is involved in include T cell activation since it negatively regulates T-cell receptor signaling which is in part mediated by diacylglycerol. By generating phosphatidic acid, stimulates PIP5KIA activity which regulates actin polymerization. Through the same mechanism could also positively regulate insulin-induced translocation of SLC2A4 to the cell membrane. Regulates RASGRP1 activity. The polypeptide is Diacylglycerol kinase zeta (Rattus norvegicus (Rat)).